We begin with the raw amino-acid sequence, 227 residues long: Cytochrome c oxidase subunit 2 (227 aa).

Residues 1 to 14 (MAYPLQLGFQDATS) lie on the Mitochondrial intermembrane side of the membrane. The helical transmembrane segment at 15-45 (PVMEELLHFHDHTLMIIFLISSLVLYIIMLM) threads the bilayer. Topologically, residues 46 to 59 (LTTKLIHTNMMNVQ) are mitochondrial matrix. A helical transmembrane segment spans residues 60-87 (EMEMIWTILPAIILILIALPSLHTLYMM). Residues 88 to 227 (DEINNPLLTI…YFESWSASLA (140 aa)) are Mitochondrial intermembrane-facing. Residues histidine 161, cysteine 196, glutamate 198, cysteine 200, histidine 204, and methionine 207 each coordinate Cu cation. Position 198 (glutamate 198) interacts with Mg(2+). Tyrosine 218 carries the phosphotyrosine modification.

Belongs to the cytochrome c oxidase subunit 2 family. As to quaternary structure, component of the cytochrome c oxidase (complex IV, CIV), a multisubunit enzyme composed of 14 subunits. The complex is composed of a catalytic core of 3 subunits MT-CO1, MT-CO2 and MT-CO3, encoded in the mitochondrial DNA, and 11 supernumerary subunits COX4I, COX5A, COX5B, COX6A, COX6B, COX6C, COX7A, COX7B, COX7C, COX8 and NDUFA4, which are encoded in the nuclear genome. The complex exists as a monomer or a dimer and forms supercomplexes (SCs) in the inner mitochondrial membrane with NADH-ubiquinone oxidoreductase (complex I, CI) and ubiquinol-cytochrome c oxidoreductase (cytochrome b-c1 complex, complex III, CIII), resulting in different assemblies (supercomplex SCI(1)III(2)IV(1) and megacomplex MCI(2)III(2)IV(2)). Found in a complex with TMEM177, COA6, COX18, COX20, SCO1 and SCO2. Interacts with TMEM177 in a COX20-dependent manner. Interacts with COX20. Interacts with COX16. Cu cation is required as a cofactor.

Its subcellular location is the mitochondrion inner membrane. The catalysed reaction is 4 Fe(II)-[cytochrome c] + O2 + 8 H(+)(in) = 4 Fe(III)-[cytochrome c] + 2 H2O + 4 H(+)(out). Functionally, component of the cytochrome c oxidase, the last enzyme in the mitochondrial electron transport chain which drives oxidative phosphorylation. The respiratory chain contains 3 multisubunit complexes succinate dehydrogenase (complex II, CII), ubiquinol-cytochrome c oxidoreductase (cytochrome b-c1 complex, complex III, CIII) and cytochrome c oxidase (complex IV, CIV), that cooperate to transfer electrons derived from NADH and succinate to molecular oxygen, creating an electrochemical gradient over the inner membrane that drives transmembrane transport and the ATP synthase. Cytochrome c oxidase is the component of the respiratory chain that catalyzes the reduction of oxygen to water. Electrons originating from reduced cytochrome c in the intermembrane space (IMS) are transferred via the dinuclear copper A center (CU(A)) of subunit 2 and heme A of subunit 1 to the active site in subunit 1, a binuclear center (BNC) formed by heme A3 and copper B (CU(B)). The BNC reduces molecular oxygen to 2 water molecules using 4 electrons from cytochrome c in the IMS and 4 protons from the mitochondrial matrix. In Elephas maximus (Indian elephant), this protein is Cytochrome c oxidase subunit 2 (MT-CO2).